Reading from the N-terminus, the 337-residue chain is MSRVTLSRYLIEQTRSHNTPADLRFLIEVVARACKEISHAVSKGALGGVLGSMGTENVQGEVQKKLDVMSNEILLEANEWGGHLAGMASEEMDSAYQIPGKYPKGAYLLVFDPLDGSSNIDVNVSVGTIFSVLRCPDQYLTQNDSLNEQAFLQPGTQQVAAGYAIYGPQTMLMLTLGNGVKGFTLDRELGSFVLTHDNLCVPETTAEFAINMSNQRHWEPPVKRYVDELLAGKTGPLDKDYNMRWIASMVADVHRILTRGGIFMYPRDAREPSKPGKLRLMYEANPMSFIIEQAGGAATNGTQRILDIQPESLHQRVAVFLGSKAEVERITDYHLEG.

Mg(2+) contacts are provided by Glu90, Asp112, Leu114, and Asp115. Substrate contacts are provided by residues 115 to 118, Asn211, and Lys277; that span reads DGSS. Glu283 is a binding site for Mg(2+).

This sequence belongs to the FBPase class 1 family. As to quaternary structure, homotetramer. Mg(2+) serves as cofactor.

The protein resides in the cytoplasm. The catalysed reaction is beta-D-fructose 1,6-bisphosphate + H2O = beta-D-fructose 6-phosphate + phosphate. It functions in the pathway carbohydrate biosynthesis; gluconeogenesis. This Azotobacter vinelandii (strain DJ / ATCC BAA-1303) protein is Fructose-1,6-bisphosphatase class 1.